Reading from the N-terminus, the 285-residue chain is D-apionate oxidoisomerase (285 aa).

NAD(+)-binding positions include 15–17 (GKM), E36, and D71. 2 residues coordinate Zn(2+): H116 and E186.

It belongs to the ApnO family. Requires Zn(2+) as cofactor.

It carries out the reaction D-apionate + NAD(+) = 3-oxoisoapionate + NADH + H(+). Its pathway is carbohydrate metabolism. Involved in catabolism of D-apiose. Catalyzes the conversion of D-apionate to 3-oxo-isoapionate. The protein is D-apionate oxidoisomerase of Pectobacterium atrosepticum (strain SCRI 1043 / ATCC BAA-672) (Erwinia carotovora subsp. atroseptica).